Reading from the N-terminus, the 84-residue chain is Kunitz-type serine protease inhibitor DrKIn-II (84 aa).

Residues 1–24 (MSSGGLLLLLGLLTLWAELTPISG) form the signal peptide. The region spanning 31 to 81 (CNLAPESGRCRAHLRRIYYNLESNKCEVFFYGGCGGNDNNFSTWDECRHTC) is the BPTI/Kunitz inhibitor domain. 3 disulfide bridges follow: cysteine 31–cysteine 81, cysteine 40–cysteine 64, and cysteine 56–cysteine 77.

The protein belongs to the venom Kunitz-type family. As to expression, expressed by the venom gland.

It is found in the secreted. In terms of biological role, serine protease inhibitor that inhibits plasmin (90%) (Ki=0.19 nM), trypsin (70%), FXIa/F11 (37%) (Ki=6 nM) and FXa/F10 (20%), and prolonges the activated partial thromboplastin time. This antifibrinolytic property has been confirmed by a fibrin plate assay. Shows less antifibrinolytic activity that aprotinin. In vivo, reduces the bleeding time in a murine bleeding model, and prevents the increase of fibrin(ogen) degradation products in coagulation-stimulated mice. The chain is Kunitz-type serine protease inhibitor DrKIn-II from Daboia russelii (Russel's viper).